A 721-amino-acid chain; its full sequence is Polyribonucleotide nucleotidyltransferase (721 aa).

Mg(2+) is bound by residues D495 and D501. In terms of domain architecture, KH spans 562 to 621 (PRLLSFRIDPELIGTVIGPGGRTIKGITERTNTKIDIEDGGIVTIASHDGAAAEAAQRII). An S1 motif domain is found at 631–699 (GEVFSGTITR…NRGRINLTLR (69 aa)). A disordered region spans residues 700-721 (GVPQNGEETQSEPAPTPVAPLN).

It belongs to the polyribonucleotide nucleotidyltransferase family. The cofactor is Mg(2+).

It is found in the cytoplasm. It carries out the reaction RNA(n+1) + phosphate = RNA(n) + a ribonucleoside 5'-diphosphate. Involved in mRNA degradation. Catalyzes the phosphorolysis of single-stranded polyribonucleotides processively in the 3'- to 5'-direction. This chain is Polyribonucleotide nucleotidyltransferase, found in Prochlorococcus marinus (strain MIT 9303).